Reading from the N-terminus, the 296-residue chain is Ribosomal RNA small subunit methyltransferase A (296 aa).

6 residues coordinate S-adenosyl-L-methionine: N28, L30, G55, E77, D103, and N122.

The protein belongs to the class I-like SAM-binding methyltransferase superfamily. rRNA adenine N(6)-methyltransferase family. RsmA subfamily.

Its subcellular location is the cytoplasm. It carries out the reaction adenosine(1518)/adenosine(1519) in 16S rRNA + 4 S-adenosyl-L-methionine = N(6)-dimethyladenosine(1518)/N(6)-dimethyladenosine(1519) in 16S rRNA + 4 S-adenosyl-L-homocysteine + 4 H(+). In terms of biological role, specifically dimethylates two adjacent adenosines (A1518 and A1519) in the loop of a conserved hairpin near the 3'-end of 16S rRNA in the 30S particle. May play a critical role in biogenesis of 30S subunits. In Sinorhizobium fredii (strain NBRC 101917 / NGR234), this protein is Ribosomal RNA small subunit methyltransferase A.